Consider the following 101-residue polypeptide: Urease subunit beta (101 aa).

The protein belongs to the urease beta subunit family. In terms of assembly, heterotrimer of UreA (gamma), UreB (beta) and UreC (alpha) subunits. Three heterotrimers associate to form the active enzyme.

It localises to the cytoplasm. The catalysed reaction is urea + 2 H2O + H(+) = hydrogencarbonate + 2 NH4(+). Its pathway is nitrogen metabolism; urea degradation; CO(2) and NH(3) from urea (urease route): step 1/1. The protein is Urease subunit beta of Burkholderia orbicola (strain MC0-3).